We begin with the raw amino-acid sequence, 349 residues long: MDIFNGLPDDVLVKILSFVPTKVAVSTSILSKRWEFLWMWLPRLDFGSPKTDLLAFLNTCQYDKEEEVGLVDFIDKKLPLHRAPFLAMYVCWKFLMNVGMKTYFHVRHLETRQREGKSLQDILSICPVLDDLSVICSVHQDVKEFTIIVPSLQSLTLFIENCEVFDGYVIDTPLKYLKLEDVHEEEHYCLLKKMPKLREAYVDVQLDDLKSLIGSITSVKRLNHMFREKSKILGQLLKDSPNLRVLNIFKVQGHVTLSTGVDCWNQPISVPECLLESLQIFNLSHYFGKQQDLDFVVYILKNACHLKTATILADEPEHLVPNLKELTLSPRASSTCQLSIRCGLGSERS.

The 47-residue stretch at 1-47 (MDIFNGLPDDVLVKILSFVPTKVAVSTSILSKRWEFLWMWLPRLDFG) folds into the F-box domain. Positions 263–311 (CWNQPISVPECLLESLQIFNLSHYFGKQQDLDFVVYILKNACHLKTATI) constitute an FBD domain.

This Arabidopsis thaliana (Mouse-ear cress) protein is Probable FBD-associated F-box protein At5g38565.